The chain runs to 293 residues: Diaminopimelate epimerase (293 aa).

Substrate-binding residues include Asn-17, Gln-47, and Asn-67. Catalysis depends on Cys-76, which acts as the Proton donor. Substrate is bound by residues 77 to 78 (GN), Asn-164, Asn-197, and 215 to 216 (ER). The active-site Proton acceptor is Cys-224. Position 225 to 226 (225 to 226 (GS)) interacts with substrate.

The protein belongs to the diaminopimelate epimerase family. In terms of assembly, homodimer.

It localises to the cytoplasm. The enzyme catalyses (2S,6S)-2,6-diaminopimelate = meso-2,6-diaminopimelate. It functions in the pathway amino-acid biosynthesis; L-lysine biosynthesis via DAP pathway; DL-2,6-diaminopimelate from LL-2,6-diaminopimelate: step 1/1. In terms of biological role, catalyzes the stereoinversion of LL-2,6-diaminopimelate (L,L-DAP) to meso-diaminopimelate (meso-DAP), a precursor of L-lysine and an essential component of the bacterial peptidoglycan. In Rhodopseudomonas palustris (strain HaA2), this protein is Diaminopimelate epimerase.